The following is a 290-amino-acid chain: Sodium/potassium-transporting ATPase subunit beta-2 (290 aa).

Over 1 to 39 the chain is Cytoplasmic; it reads MVIQKEKKSCGQVVEEWKEFVWNPRTHQFMGRTGTSWAF. The chain crosses the membrane as a helical; Signal-anchor for type II membrane protein span at residues 40–67; that stretch reads ILLFYLVFYGFLTAMFSLTMWVMLQTVS. The Extracellular segment spans residues 68-290; it reads DHTPKYQDRL…VAFKLRINKT (223 aa). N-linked (GlcNAc...) asparagine glycosylation is found at Asn-96 and Asn-118. Cys-129 and Cys-150 are oxidised to a cystine. Asn-153 is a glycosylation site (N-linked (GlcNAc...) asparagine). Cysteines 160 and 177 form a disulfide. N-linked (GlcNAc...) asparagine glycans are attached at residues Asn-193, Asn-197, Asn-220, and Asn-238. The tract at residues 193-290 is immunoglobulin-like; that stretch reads NQSMNVTCVG…VAFKLRINKT (98 aa). Cys-200 and Cys-261 form a disulfide bridge.

The protein belongs to the X(+)/potassium ATPases subunit beta family. The sodium/potassium-transporting ATPase is composed of a catalytic alpha subunit, an auxiliary non-catalytic beta subunit and an additional regulatory subunit. Interacts with isoform 2 of BSG.

Its subcellular location is the cell membrane. Functionally, this is the non-catalytic component of the active enzyme, which catalyzes the hydrolysis of ATP coupled with the exchange of Na(+) and K(+) ions across the plasma membrane. The exact function of the beta-2 subunit is not known. Its function is as follows. Mediates cell adhesion of neurons and astrocytes, and promotes neurite outgrowth. This is Sodium/potassium-transporting ATPase subunit beta-2 (Atp1b2) from Mus musculus (Mouse).